The following is a 122-amino-acid chain: Protein TCL1B3 (122 aa).

This sequence belongs to the TCL1 family.

The protein is Protein TCL1B3 (Tcl1b3) of Mus musculus (Mouse).